Consider the following 574-residue polypeptide: Developmental and secondary metabolism regulator veA (574 aa).

Disordered stretches follow at residues 1 to 22 (MATR…SRIT), 39 to 60 (ERAR…VDPP), 255 to 500 (RSSD…GAGK), and 513 to 540 (RSYE…YPRR). Residues 25–230 (GKKLTYKLNV…AEQGCRVRIR (206 aa)) enclose the Velvet domain. A Nuclear localization signal motif is present at residues 39–44 (ERARAC). Pro residues-rich tracts occupy residues 314-323 (RPLPPAPGPA) and 330-341 (PAPPAPPAPPSH). Composition is skewed to polar residues over residues 343-353 (PGYQSHLSFGS), 385-394 (HARNPSTSAE), 406-415 (RMSTERSSYP), and 448-458 (VAQSAAPRSQT). Residues 457-501 (QTPSSSLVPSLPPLKALSGDYPNNLSQSSSSTSQSPSHDLGAGKK) form a PEST region. Composition is skewed to low complexity over residues 459–474 (PSSS…KALS) and 482–493 (SQSSSSTSQSPS). A compositionally biased stretch (basic and acidic residues) spans 513–525 (RSYEDSFGHDDRP).

This sequence belongs to the velvet family. VeA subfamily. As to quaternary structure, component of the heterotrimeric velvet complex composed of laeA, veA and velB; VeA acting as a bridging protein between laeA and velB.

The protein resides in the nucleus. It localises to the cytoplasm. Its function is as follows. Component of the velvet transcription factor complex that controls sexual/asexual developmental ratio in response to light, promoting sexual development in the darkness while stimulating asexual sporulation under illumination. The velvet complex hat acts as a global regulator for secondary metabolite gene expression. Controls the expression of the penicillin gene cluster. In Aspergillus oryzae (strain ATCC 42149 / RIB 40) (Yellow koji mold), this protein is Developmental and secondary metabolism regulator veA.